A 653-amino-acid polypeptide reads, in one-letter code: DNA polymerase (653 aa).

This sequence belongs to the DNA polymerase type-B family.

The catalysed reaction is DNA(n) + a 2'-deoxyribonucleoside 5'-triphosphate = DNA(n+1) + diphosphate. Replicates viral genomic DNA. The chain is DNA polymerase from Acidianus convivator (ABV).